The chain runs to 248 residues: Probable transcriptional regulatory protein AZC_0510 (248 aa).

This sequence belongs to the TACO1 family.

The protein resides in the cytoplasm. The protein is Probable transcriptional regulatory protein AZC_0510 of Azorhizobium caulinodans (strain ATCC 43989 / DSM 5975 / JCM 20966 / LMG 6465 / NBRC 14845 / NCIMB 13405 / ORS 571).